The sequence spans 480 residues: MDHAAWLNEETGEAAQEAYKYFMRPDPNQREFLGPIEEEDDPLTGMRAKFRMAKVGMVRNAKDEDKKEVKVYLGFNDVTYLPHIRIPNAKPLQGWYQDKHNDKRGSRARPCFSEAILTEPYGGYCTVGCAFCYVNSGFRGYRGTGLISVPVNYGEQVRNMLSKSRTSAAGYFSSFTDPFLPIEDVYHNTQQGAEAFVELGLPIFFLSRLSYPSWAIDLLKRNPYSYAQKSLNTGNDRDWHKLSPGAISLQDHIDEIAELRRQGIYTSIQVNPVVPGIVTHDDIRHLFERLAAVGNNHVIVKFVEAGYSWAPAMIERLHKRFGPERTKAFTDLFTENQAGAQKTIAEPYRVEAHQLYRKWATELGMTYATCYEYRRGKPGTGEPAWLSMGREMITADQCHGQRVPMFTRTDLDQPFQEVKECAPTGCLHCADDNEGKPRCGSELFGAAKALRSPDFKKIVEPTPPEEDGGERKIIPITQID.

Positions 125, 129, and 132 each coordinate iron-sulfur cluster. Positions 457-480 are disordered; that stretch reads KIVEPTPPEEDGGERKIIPITQID.

It catalyses the reaction 5-N(alpha)-glycyl-dTMP in DNA + AH2 + S-adenosyl-L-methionine = 5-C(alpha)-glycyl-dTMP in DNA + 5'-deoxyadenosine + L-methionine + A + H(+). Its function is as follows. Isomerizes 5-N-alpha-glycinylthymidine (Nalpha-GlyT) into 5-Calpha-glycinylthymidine (Calpha-GlyT) as a step in the pathway leading to thymidine hypermodifications in the viral genome. As a final result of the pathway of hypermodification, 5-aminoethyl-2'-deoxyuridine (5-NedU) substitutes for about 30% of thymidines in the viral DNA. These modifications probably prevent degradation of viral genome by the host restriction-modification antiviral defense system. In Pseudomonas phage M6, this protein is Radical SAM Nalpha-GlyT isomerase.